Reading from the N-terminus, the 509-residue chain is DNA nucleotidylexotransferase (509 aa).

Residues 1–24 (MDPPRASHLSPRKKRPRQTGALMA) form a disordered region. Residues 11–17 (PRKKRPR) carry the Nuclear localization signal motif. In terms of domain architecture, BRCT spans 27–124 (PQDIKFQDLV…KPVEMTGKHQ (98 aa)). Phosphoserine is present on Ser-134. The interval 151-509 (SQYACQRRTT…DYIEPWERNA (359 aa)) is mediates interaction with DNTTIP2. The segment at 258–262 (VGLKT) is involved in DNA binding. A 2'-deoxyribonucleoside 5'-triphosphate-binding positions include 333–338 (GFRRGK) and 342–345 (HDVD). Asp-343, Asp-345, and Asp-433 together coordinate Mg(2+). 448-449 (GW) serves as a coordination point for a 2'-deoxyribonucleoside 5'-triphosphate.

Belongs to the DNA polymerase type-X family. In terms of assembly, interacts with PRP19 and DNTTIP1. Forms a ternary complex with DNTTIP2 and core histone. Released from this complex by PCNA. Interacts with TRERF1. Mg(2+) is required as a cofactor.

The protein resides in the nucleus. The enzyme catalyses DNA(n) + a 2'-deoxyribonucleoside 5'-triphosphate = DNA(n+1) + diphosphate. Template-independent DNA polymerase which catalyzes the random addition of deoxynucleoside 5'-triphosphate to the 3'-end of a DNA initiator. One of the in vivo functions of this enzyme is the addition of nucleotides at the junction (N region) of rearranged Ig heavy chain and T-cell receptor gene segments during the maturation of B- and T-cells. The sequence is that of DNA nucleotidylexotransferase (DNTT) from Homo sapiens (Human).